Consider the following 603-residue polypeptide: Elongation factor 4 (603 aa).

Residues 7-189 (SRLRNFCIIA…AVVDRIPSPK (183 aa)) enclose the tr-type G domain. Residues 19-24 (DHGKST) and 136-139 (NKVD) contribute to the GTP site.

It belongs to the TRAFAC class translation factor GTPase superfamily. Classic translation factor GTPase family. LepA subfamily.

Its subcellular location is the cell inner membrane. It catalyses the reaction GTP + H2O = GDP + phosphate + H(+). Functionally, required for accurate and efficient protein synthesis under certain stress conditions. May act as a fidelity factor of the translation reaction, by catalyzing a one-codon backward translocation of tRNAs on improperly translocated ribosomes. Back-translocation proceeds from a post-translocation (POST) complex to a pre-translocation (PRE) complex, thus giving elongation factor G a second chance to translocate the tRNAs correctly. Binds to ribosomes in a GTP-dependent manner. The chain is Elongation factor 4 from Prochlorococcus marinus (strain NATL1A).